The chain runs to 309 residues: Probable 4-hydroxy-2-oxoglutarate aldolase, mitochondrial (309 aa).

A substrate-binding site is contributed by 49-50 (SN). Catalysis depends on Lys173, which acts as the Schiff-base intermediate with substrate.

This sequence belongs to the DapA family.

It catalyses the reaction (4S)-4-hydroxy-2-oxoglutarate = glyoxylate + pyruvate. It carries out the reaction (4R)-4-hydroxy-2-oxoglutarate = glyoxylate + pyruvate. With respect to regulation, inhibited by divalent cations. Functionally, catalyzes the final step in the metabolic pathway of hydroxyproline. Involved in osmoadaptation. This is Probable 4-hydroxy-2-oxoglutarate aldolase, mitochondrial from Emericella nidulans (strain FGSC A4 / ATCC 38163 / CBS 112.46 / NRRL 194 / M139) (Aspergillus nidulans).